Here is a 784-residue protein sequence, read N- to C-terminus: Cadherin-15 (784 aa).

Residues M1–A21 form the signal peptide. A propeptide spanning residues V22–R59 is cleaved from the precursor. 5 Cadherin domains span residues L60–F151, L152–F259, T260–F374, P375–P480, and A481–P589. The Extracellular segment spans residues L60–A605. 2 N-linked (GlcNAc...) asparagine glycosylation sites follow: N106 and N226. N-linked (GlcNAc...) asparagine glycans are attached at residues N530, N537, and N575. Residues L606 to L625 form a helical membrane-spanning segment. The Cytoplasmic portion of the chain corresponds to R626–Q784. The disordered stretch occupies residues E676–Q700.

As to expression, skeletal muscle.

The protein localises to the cell membrane. Functionally, cadherins are calcium-dependent cell adhesion proteins. They preferentially interact with themselves in a homophilic manner in connecting cells; cadherins may thus contribute to the sorting of heterogeneous cell types. M-cadherin is part of the myogenic program and may provide a trigger for terminal muscle differentiation. In Mus musculus (Mouse), this protein is Cadherin-15 (Cdh15).